Reading from the N-terminus, the 240-residue chain is Putative F-box/kelch-repeat protein At2g29860 (240 aa).

Positions 1–20 are disordered; that stretch reads MVLLSEIPGGSNGDDPNMNP. An F-box domain is found at 17 to 63; the sequence is NMNPQELPEELIESIVAPIPRCYYPSLSLLSRAFRHVITSQQLFVTR. Kelch repeat units follow at residues 120-165 and 167-212; these read KIYV…VIDG and IYVI…VTYA.

This is Putative F-box/kelch-repeat protein At2g29860 from Arabidopsis thaliana (Mouse-ear cress).